A 247-amino-acid chain; its full sequence is MNKQRVTLNCDMGESFGNWKMGSDELVMPWVDMANIACGFHASDPSVMSKTVALAKHYKVKIGAHPGYQDLVGFGRRSIPHTPAQISEIVLYQVGALKAVCQYHDVPLHYVKPHGALYNDMMESEAIFRAICEAVSIFGIPLMILATSDNQHYLDIADIYDVPLLFEAFADRQYQEDGKLTPRSQANAVYHQPEDIYNQALQIATYGSVNTANGTRLSLEADTICVHGDNPESIALVQRISQAIAKM.

The protein belongs to the LamB/PxpA family. In terms of assembly, forms a complex composed of PxpA, PxpB and PxpC.

It carries out the reaction 5-oxo-L-proline + ATP + 2 H2O = L-glutamate + ADP + phosphate + H(+). Catalyzes the cleavage of 5-oxoproline to form L-glutamate coupled to the hydrolysis of ATP to ADP and inorganic phosphate. In Vibrio vulnificus (strain CMCP6), this protein is 5-oxoprolinase subunit A.